Here is a 955-residue protein sequence, read N- to C-terminus: Outer capsid protein VP2 (955 aa).

This sequence belongs to the orbivirus VP2 family.

It localises to the virion. Its function is as follows. The VP2 protein is one of the two proteins (with VP5) which constitute the virus particle outer capsid. It is the major target of the host immunogenic response. Responsible for viral attachment to target host cell, probably by binding to sialic acid. This attachment induces virion internalization predominantly through clathrin-dependent endocytosis. The protein is Outer capsid protein VP2 (Segment-2) of Antilocapra americana (Pronghorn).